The following is a 1721-amino-acid chain: Latent-transforming growth factor beta-binding protein 1 (1721 aa).

A signal peptide spans 1–23 (MAGAWLRWGLLLWAGLLASSAHG). Low complexity predominate over residues 64–81 (RSSAAAGAPSRASPGVPS). The tract at residues 64–158 (RSSAAAGAPS…SGGGSRLQVH (95 aa)) is disordered. The span at 99-111 (RPPPPPPPEPARP) shows a compositional bias: pro residues. The segment covering 112–130 (AVPGGQLHPNPGGHPAAAP) has biased composition (low complexity). The EGF-like 1 domain maps to 187-219 (TKPSCVPPCQNGGMCLRPQLCVCKPGTKGKACE). Intrachain disulfides connect Cys191-Cys201, Cys195-Cys207, and Cys209-Cys218. The segment at 228 to 259 (SPVFGGQSPGAASSWGPPEQAAKHTSSKKADT) is disordered. Residues Asn347 and Asn378 are each glycosylated (N-linked (GlcNAc...) asparagine). The EGF-like 2 domain maps to 399 to 431 (RVVICHLPCMNGGQCSSRDKCQCPPNFTGKLCQ). Intrachain disulfides connect Cys403-Cys413, Cys407-Cys419, Cys421-Cys430, Cys559-Cys581, Cys568-Cys594, and Cys582-Cys597. N-linked (GlcNAc...) asparagine glycosylation is present at Asn424. Residues 557–609 (GRCFQETIGSQCGKALPGLSKQEDCCGTVGTSWGFNKCQKCPKKPSYHGYNQM) form the TB 1 domain. Residue Asn620 is glycosylated (N-linked (GlcNAc...) asparagine). Positions 626-663 (DINECQLQGVCPNGECLNTMGSYRCTCKIGFGPDPTFS) constitute an EGF-like 3; calcium-binding domain. Cystine bridges form between Cys630–Cys641, Cys636–Cys650, Cys652–Cys665, Cys679–Cys702, Cys689–Cys714, Cys703–Cys717, and Cys704–Cys729. A glycan (O-linked (Glc) serine) is linked at Ser647. A TB 2 domain is found at 677-729 (GPCYRLVSSGRQCMHPLSVHLTKQLCCCSVGKAWGPHCEKCPLPGTAAFKEIC). The segment at 750 to 811 (VGKGPVFVKP…APPEKEIPSL (62 aa)) is disordered. Thr769 and Thr801 each carry an O-linked (GalNAc...) threonine glycan. Residues 873 to 910 (EINECTVNPDICGAGHCINLPVRYTCICYEGYRFSEQQ) enclose the EGF-like 4; calcium-binding domain. 29 cysteine pairs are disulfide-bonded: Cys877–Cys889, Cys884–Cys898, Cys900–Cys913, Cys919–Cys931, Cys926–Cys940, Cys942–Cys955, Cys961–Cys972, Cys967–Cys981, Cys984–Cys996, Cys1002–Cys1013, Cys1008–Cys1022, Cys1025–Cys1036, Cys1042–Cys1053, Cys1048–Cys1062, Cys1064–Cys1077, Cys1083–Cys1094, Cys1089–Cys1103, Cys1105–Cys1118, Cys1124–Cys1135, Cys1130–Cys1144, Cys1146–Cys1159, Cys1165–Cys1177, Cys1172–Cys1186, Cys1188–Cys1200, Cys1206–Cys1218, Cys1212–Cys1227, Cys1229–Cys1242, Cys1248–Cys1260, and Cys1254–Cys1269. Positions 915–956 (DIDECTQVQHLCSQGRCENTEGSFLCICPAGFMASEEGTNCI) constitute an EGF-like 5; calcium-binding domain. Ser937 carries O-linked (Glc) serine glycosylation. One can recognise an EGF-like 6; calcium-binding domain in the interval 957 to 997 (DVDECLRPDVCGEGHCVNTVGAFRCEYCDSGYRMTQRGRCE). Asn974 is modified ((3R)-3-hydroxyasparagine). Residues 998 to 1037 (DIDECLNPSTCPDEQCVNSPGSYQCVPCTEGFRGWNGQCL) form the EGF-like 7; calcium-binding domain. Ser1019 is a glycosylation site (O-linked (Glc) serine). An EGF-like 8; calcium-binding domain is found at 1038–1078 (DVDECLEPNVCANGDCSNLEGSYMCSCHKGYTRTPDHKHCR). O-linked (Glc) serine glycosylation is present at Ser1059. The EGF-like 9; calcium-binding domain maps to 1079–1119 (DIDECQQGNLCVNGQCKNTEGSFRCTCGQGYQLSAAKDQCE). The EGF-like 10; calcium-binding domain occupies 1120 to 1160 (DIDECQHRHLCAHGQCRNTEGSFQCVCDQGYRASGLGDHCE). Residue Asn1137 is modified to (3R)-3-hydroxyasparagine. Residue Ser1141 is glycosylated (O-linked (Glc) serine). Positions 1161–1201 (DINECLEDKSVCQRGDCINTAGSYDCTCPDGFQLDDNKTCQ) constitute an EGF-like 11; calcium-binding domain. The Cell attachment site signature appears at 1174-1176 (RGD). Asn1197 is a glycosylation site (N-linked (GlcNAc...) asparagine). The EGF-like 12; calcium-binding domain maps to 1202–1243 (DINECEHPGLCGPQGECLNTEGSFHCVCQQGFSISADGRTCE). An O-linked (Glc) serine glycan is attached at Ser1224. The EGF-like 13; calcium-binding domain maps to 1244–1281 (DIDECVNNTVCDSHGFCDNTAGSFRCLCYQGFQAPQDG). N-linked (GlcNAc...) asparagine glycosylation occurs at Asn1250. In terms of domain architecture, EGF-like 14; calcium-binding spans 1286 to 1328 (DVNECELLSGVCGEAFCENVEGSFLCVCADENQEYSPMTGQCR). The tract at residues 1344-1411 (EEKKECYYNL…PKGKGFVPAG (68 aa)) is 8-Cys3 region. Positions 1347–1401 (KECYYNLNDASLCDNVLAPNVTKQECCCTSGVGWGDNCEIFPCPVLGTAEFTEMC) constitute a TB 3 domain. 4 cysteine pairs are disulfide-bonded: Cys1349–Cys1372, Cys1359–Cys1384, Cys1373–Cys1389, and Cys1374–Cys1401. An N-linked (GlcNAc...) asparagine glycan is attached at Asn1366. Ser1414 bears the Phosphoserine; by FAM20C mark. The 43-residue stretch at 1424-1466 (DADECLLFGQEICKNGFCLNTRPGYECYCKQGTYYDPVKLQCF) folds into the EGF-like 15; calcium-binding domain. Positions 1467 to 1503 (DMDECQDPSSCIDGQCVNTEGSYNCFCTHPMVLDASE) constitute an EGF-like 16; calcium-binding domain. Cystine bridges form between Cys1471-Cys1482, Cys1477-Cys1491, Cys1526-Cys1550, Cys1536-Cys1562, Cys1551-Cys1565, and Cys1552-Cys1577. Residue Ser1488 is glycosylated (O-linked (Glc) serine). The segment at 1507 to 1721 (IRPAESNEQI…LNLEKDSDLE (215 aa)) is C-terminal domain. The TB 4 domain maps to 1524 to 1577 (DLCWEHLSDEYVCSRPLVGKQTTYTECCCLYGEAWGMQCALCPLKDSDDYAQLC). Phosphoserine occurs at positions 1597 and 1616. In terms of domain architecture, EGF-like 17 spans 1621–1657 (QAEECGILNGCENGRCVRVQEGYTCDCFDGYHLDTAK). Cystine bridges form between Cys1625–Cys1636, Cys1631–Cys1645, Cys1666–Cys1681, Cys1676–Cys1690, and Cys1692–Cys1705. In terms of domain architecture, EGF-like 18; calcium-binding spans 1662–1706 (DVNECDELNNRMSLCKNAKCINTDGSYKCLCLPGYVPSDKPNYCT). O-linked (Glc) serine glycosylation is present at Ser1687.

This sequence belongs to the LTBP family. As to quaternary structure, interacts with TGFB1; associates via disulfide bonds with the Latency-associated peptide chain (LAP) regulatory chain of TGFB1, leading to regulate activation of TGF-beta-1. LTBP1 does not bind directly to TGF-beta-1, the active chain of TGFB1. Interacts (via C-terminal domain) with FBN1 (via N-terminal domain). Interacts with FBN2. Interacts with ADAMTSL2. Interacts with EFEMP2. Post-translationally, contains hydroxylated asparagine residues. In terms of processing, isoform Short N-terminus is blocked. Two intrachain disulfide bonds from the TB3 domain are rearranged upon TGFB1 binding, and form interchain bonds with TGFB1 propeptide, anchoring it to the extracellular matrix. Post-translationally, O-glycosylated on serine residues by POGLUT2 and POGLUT3. In terms of tissue distribution, expressed in the aorta (at protein level). Isoform Long: Expressed in fibroblasts.

Its subcellular location is the secreted. The protein localises to the extracellular space. The protein resides in the extracellular matrix. Its function is as follows. Key regulator of transforming growth factor beta (TGFB1, TGFB2 and TGFB3) that controls TGF-beta activation by maintaining it in a latent state during storage in extracellular space. Associates specifically via disulfide bonds with the Latency-associated peptide (LAP), which is the regulatory chain of TGF-beta, and regulates integrin-dependent activation of TGF-beta. Outcompeted by LRRC32/GARP for binding to LAP regulatory chain of TGF-beta. The protein is Latent-transforming growth factor beta-binding protein 1 of Homo sapiens (Human).